A 360-amino-acid chain; its full sequence is Ribosomal RNA large subunit methyltransferase F (360 aa).

Positions 1 to 38 are disordered; that stretch reads MTRSTTPPMRAKHSSAKRSPSRSAAKVNPVSVKPNKPL. A compositionally biased stretch (basic residues) spans 10-20; it reads RAKHSSAKRSP.

This sequence belongs to the methyltransferase superfamily. METTL16/RlmF family.

The protein localises to the cytoplasm. It carries out the reaction adenosine(1618) in 23S rRNA + S-adenosyl-L-methionine = N(6)-methyladenosine(1618) in 23S rRNA + S-adenosyl-L-homocysteine + H(+). Specifically methylates the adenine in position 1618 of 23S rRNA. This Shewanella frigidimarina (strain NCIMB 400) protein is Ribosomal RNA large subunit methyltransferase F.